The chain runs to 284 residues: Tropomyosin Lep s 1.0101 (284 aa).

Residues 1–273 (MEAIKKKMQA…KDRYRALADE (273 aa)) adopt a coiled-coil conformation. Over residues 155–171 (AEDADGKSDEVSRKMAQ) the composition is skewed to basic and acidic residues. Residues 155 to 187 (AEDADGKSDEVSRKMAQVEDDLEVAEDRVKSGD) form a disordered region.

Belongs to the tropomyosin family. Homodimer.

Tropomyosin, in association with the troponin complex, plays a central role in the calcium dependent regulation of muscle contraction. The protein is Tropomyosin Lep s 1.0101 of Lepisma saccharinum (Silverfish).